A 127-amino-acid chain; its full sequence is RutC family protein PYRAB12510 (127 aa).

This sequence belongs to the RutC family.

The protein is RutC family protein PYRAB12510 of Pyrococcus abyssi (strain GE5 / Orsay).